A 187-amino-acid chain; its full sequence is GTP cyclohydrolase 1 (187 aa).

Zn(2+) is bound by residues Cys-76, His-79, and Cys-148.

It belongs to the GTP cyclohydrolase I family. Toroid-shaped homodecamer, composed of two pentamers of five dimers.

The enzyme catalyses GTP + H2O = 7,8-dihydroneopterin 3'-triphosphate + formate + H(+). Its pathway is cofactor biosynthesis; 7,8-dihydroneopterin triphosphate biosynthesis; 7,8-dihydroneopterin triphosphate from GTP: step 1/1. This Streptococcus agalactiae serotype V (strain ATCC BAA-611 / 2603 V/R) protein is GTP cyclohydrolase 1.